The sequence spans 382 residues: uncharacterized protein (382 aa).

The next 12 membrane-spanning stretches (helical) occupy residues 14–34 (GLLL…LWLA), 45–65 (MVSS…GYLI), 75–95 (YLAS…VGFW), 102–122 (FIAG…LMCS), 131–151 (LLAA…LLVS), 157–177 (LLHV…PLLF), 204–224 (LGVN…GLMP), 235–255 (ASIG…QWPV), 265–284 (LLVL…VMLT), 289–311 (APAL…AWAC), 325–345 (ALLL…AMLM), and 349–369 (SDNL…LMLL).

It belongs to the major facilitator superfamily. YcaD (TC 2.A.1.26) family.

It is found in the cell inner membrane. This is an uncharacterized protein from Salmonella arizonae (strain ATCC BAA-731 / CDC346-86 / RSK2980).